Here is a 104-residue protein sequence, read N- to C-terminus: Large ribosomal subunit protein bL21 (104 aa).

The protein belongs to the bacterial ribosomal protein bL21 family. In terms of assembly, part of the 50S ribosomal subunit. Contacts protein L20.

Functionally, this protein binds to 23S rRNA in the presence of protein L20. The chain is Large ribosomal subunit protein bL21 from Symbiobacterium thermophilum (strain DSM 24528 / JCM 14929 / IAM 14863 / T).